Consider the following 155-residue polypeptide: Small ribosomal subunit protein uS9 (155 aa).

Belongs to the universal ribosomal protein uS9 family.

The polypeptide is Small ribosomal subunit protein uS9 (Sinorhizobium fredii (strain NBRC 101917 / NGR234)).